The primary structure comprises 504 residues: Maturase K (504 aa).

This sequence belongs to the intron maturase 2 family. MatK subfamily.

The protein resides in the plastid. It localises to the chloroplast. Functionally, usually encoded in the trnK tRNA gene intron. Probably assists in splicing its own and other chloroplast group II introns. This is Maturase K from Cucumis sativus (Cucumber).